Reading from the N-terminus, the 216-residue chain is Vascular endothelial growth factor A (216 aa).

The N-terminal stretch at 1–26 is a signal peptide; that stretch reads MNFLLTWIHWGLAALLYFHNAKVLQA. 3 disulfides stabilise this stretch: Cys-52/Cys-94, Cys-83/Cys-128, and Cys-87/Cys-130. N-linked (GlcNAc...) asparagine glycosylation is present at Asn-101. Residues 140 to 161 form a disordered region; that stretch reads QEKKSKREKGKGQKRKRKRGRY. Residues 145–161 show a composition bias toward basic residues; it reads KREKGKGQKRKRKRGRY.

Belongs to the PDGF/VEGF growth factor family. In terms of assembly, homodimer; disulfide-linked. Also found as heterodimer with PGF. Interacts to the FLT1/VEGFR1 and KDR/VEGFR2 receptors, heparan sulfate and heparin. In terms of tissue distribution, expressed in venom gland, heart, brain, liver, skeletal muscle and kidney.

It localises to the secreted. Functionally, growth factor active in angiogenesis, vasculogenesis and endothelial cell growth. Induces endothelial cell proliferation, promotes cell migration, inhibits apoptosis and induces permeabilization of blood vessels. This Protobothrops flavoviridis (Habu) protein is Vascular endothelial growth factor A.